Reading from the N-terminus, the 421-residue chain is MNRGFSRKSHTFLPKIFFRKMSSSGTKDKPELQFPFLQDEDTVATLQECKTLFILRGLPGSGKSTLARVIVDKYRDGTKMVSADAYKITPGARGAFSEEYKRLDEDLAAYCRRRDIRILVLDDTNHERERLEQLFEMADQYQYQVVLVEPKTAWRLGCAQLKEKNQWQLSADDLKKLKPGLEKDFLPLYFGWFLTKKSSETLRKAGQVFLEELGNHKAFKKELRQFIPGDEPREKMDLVTYFGKRPPGVLHCTTKFCDYGKAPGAEEYAQQDVLKKSYSKAFTLTISALFVTPKTTGARVELSEQQLQLWPSDVDKLSPTDNLPRGSRAHITLGCAADVEAVQTGLDLLEILRQEKGGSRGEEVGELSRGKLYSLGNGRWMLTLAKNMEVRAIFTGYYGKGKPVPTQGSRKGGALQSCTII.

2 positions are modified to phosphoserine: serine 6 and serine 9. Tyrosine 110 is modified (phosphotyrosine). Residue serine 170 is modified to Phosphoserine. Histidine 251 serves as the catalytic Proton acceptor. Threonine 253 contacts substrate. The active-site Proton donor is the histidine 330. Position 332 (threonine 332) interacts with substrate. Residue serine 359 is modified to Phosphoserine. Residue cysteine 418 is modified to Cysteine methyl ester. Cysteine 418 is lipidated: S-farnesyl cysteine. Residues 419-421 (TII) constitute a propeptide, removed in mature form.

The protein belongs to the 2H phosphoesterase superfamily. CNPase family. In terms of assembly, exists as monomers and homodimers.

The protein resides in the membrane. It localises to the melanosome. The catalysed reaction is a nucleoside 2',3'-cyclic phosphate + H2O = a nucleoside 2'-phosphate + H(+). Catalyzes the formation of 2'-nucleotide products from 2',3'-cyclic substrates. May participate in RNA metabolism in the myelinating cell, CNP is the third most abundant protein in central nervous system myelin. The polypeptide is 2',3'-cyclic-nucleotide 3'-phosphodiesterase (Pongo abelii (Sumatran orangutan)).